The chain runs to 265 residues: AT-hook motif nuclear-localized protein 18 (265 aa).

The disordered stretch occupies residues 1-75; the sequence is MDEVSRSHTP…AGSKNKPKAP (75 aa). A compositionally biased stretch (basic residues) spans 19 to 30; sequence HYHHQNAGRQKR. A DNA-binding region (a.T hook) is located at residues 59–71; sequence RRPRGRPAGSKNK. Residues 83-217 form the PPC domain; sequence ANAFRCHVME…EEEETEREID (135 aa).

The protein resides in the nucleus. Functionally, transcription factor that specifically binds AT-rich DNA sequences related to the nuclear matrix attachment regions (MARs). Acts redundantly with AHL22, AHL27 and AHL29 in the regulation of flowering and regulation of the hypocotyl elongation. This is AT-hook motif nuclear-localized protein 18 from Arabidopsis thaliana (Mouse-ear cress).